Reading from the N-terminus, the 250-residue chain is Leucyl/phenylalanyl-tRNA--protein transferase (250 aa).

This sequence belongs to the L/F-transferase family.

The protein resides in the cytoplasm. The catalysed reaction is N-terminal L-lysyl-[protein] + L-leucyl-tRNA(Leu) = N-terminal L-leucyl-L-lysyl-[protein] + tRNA(Leu) + H(+). The enzyme catalyses N-terminal L-arginyl-[protein] + L-leucyl-tRNA(Leu) = N-terminal L-leucyl-L-arginyl-[protein] + tRNA(Leu) + H(+). It catalyses the reaction L-phenylalanyl-tRNA(Phe) + an N-terminal L-alpha-aminoacyl-[protein] = an N-terminal L-phenylalanyl-L-alpha-aminoacyl-[protein] + tRNA(Phe). Functionally, functions in the N-end rule pathway of protein degradation where it conjugates Leu, Phe and, less efficiently, Met from aminoacyl-tRNAs to the N-termini of proteins containing an N-terminal arginine or lysine. This Cupriavidus taiwanensis (strain DSM 17343 / BCRC 17206 / CCUG 44338 / CIP 107171 / LMG 19424 / R1) (Ralstonia taiwanensis (strain LMG 19424)) protein is Leucyl/phenylalanyl-tRNA--protein transferase.